The sequence spans 435 residues: Elongation factor 1-alpha (435 aa).

The 224-residue stretch at 4–227 folds into the tr-type G domain; that stretch reads KPHLNLIVIG…YLDQLELPPK (224 aa). The segment at 13 to 20 is G1; that stretch reads GHIDHGKS. A GTP-binding site is contributed by 13–20; it reads GHIDHGKS. A Mg(2+)-binding site is contributed by serine 20. Residues 69-73 are G2; sequence GVTIN. Positions 90–93 are G3; the sequence is DAPG. GTP contacts are provided by residues 90 to 94 and 152 to 155; these read DAPGH and NKMD. The interval 152 to 155 is G4; that stretch reads NKMD. The tract at residues 193 to 195 is G5; the sequence is VAP.

This sequence belongs to the TRAFAC class translation factor GTPase superfamily. Classic translation factor GTPase family. EF-Tu/EF-1A subfamily.

It is found in the cytoplasm. It catalyses the reaction GTP + H2O = GDP + phosphate + H(+). GTP hydrolase that promotes the GTP-dependent binding of aminoacyl-tRNA to the A-site of ribosomes during protein biosynthesis. This Saccharolobus solfataricus (strain ATCC 35092 / DSM 1617 / JCM 11322 / P2) (Sulfolobus solfataricus) protein is Elongation factor 1-alpha.